Here is a 292-residue protein sequence, read N- to C-terminus: ATP synthase gamma chain (292 aa).

Belongs to the ATPase gamma chain family. As to quaternary structure, F-type ATPases have 2 components, CF(1) - the catalytic core - and CF(0) - the membrane proton channel. CF(1) has five subunits: alpha(3), beta(3), gamma(1), delta(1), epsilon(1). CF(0) has three main subunits: a, b and c.

The protein localises to the cell inner membrane. Functionally, produces ATP from ADP in the presence of a proton gradient across the membrane. The gamma chain is believed to be important in regulating ATPase activity and the flow of protons through the CF(0) complex. The chain is ATP synthase gamma chain from Brucella ovis (strain ATCC 25840 / 63/290 / NCTC 10512).